Here is a 298-residue protein sequence, read N- to C-terminus: Bifunctional protein FolD (298 aa).

NADP(+) is bound by residues 165-167 (GRS), Ser190, and Ile231.

Belongs to the tetrahydrofolate dehydrogenase/cyclohydrolase family. Homodimer.

The enzyme catalyses (6R)-5,10-methylene-5,6,7,8-tetrahydrofolate + NADP(+) = (6R)-5,10-methenyltetrahydrofolate + NADPH. It catalyses the reaction (6R)-5,10-methenyltetrahydrofolate + H2O = (6R)-10-formyltetrahydrofolate + H(+). Its pathway is one-carbon metabolism; tetrahydrofolate interconversion. Functionally, catalyzes the oxidation of 5,10-methylenetetrahydrofolate to 5,10-methenyltetrahydrofolate and then the hydrolysis of 5,10-methenyltetrahydrofolate to 10-formyltetrahydrofolate. This chain is Bifunctional protein FolD, found in Prochlorococcus marinus (strain AS9601).